Consider the following 259-residue polypeptide: Type III pantothenate kinase (259 aa).

An ATP-binding site is contributed by 6–13 (DVGNTNCT). Substrate is bound at residue 107 to 110 (GSDR). Residue D109 is the Proton acceptor of the active site. Position 129 (D129) interacts with K(+). Position 132 (T132) interacts with ATP. T184 contacts substrate.

Belongs to the type III pantothenate kinase family. As to quaternary structure, homodimer. The cofactor is NH4(+). Requires K(+) as cofactor.

The protein resides in the cytoplasm. It carries out the reaction (R)-pantothenate + ATP = (R)-4'-phosphopantothenate + ADP + H(+). It functions in the pathway cofactor biosynthesis; coenzyme A biosynthesis; CoA from (R)-pantothenate: step 1/5. Functionally, catalyzes the phosphorylation of pantothenate (Pan), the first step in CoA biosynthesis. This is Type III pantothenate kinase from Listeria monocytogenes serovar 1/2a (strain ATCC BAA-679 / EGD-e).